Reading from the N-terminus, the 152-residue chain is D-erythrulose-4-phosphate isomerase (152 aa).

C67 (proton acceptor) is an active-site residue.

This sequence belongs to the LacAB/RpiB family.

The enzyme catalyses D-erythrulose 4-phosphate = D-erythrose 4-phosphate. It functions in the pathway carbohydrate metabolism. Its function is as follows. Involved in catabolism of D-apiose. Catalyzes the isomerization of D-erythrulose 4-phosphate to D-erythrose 4-phosphate. In Pectobacterium atrosepticum (strain SCRI 1043 / ATCC BAA-672) (Erwinia carotovora subsp. atroseptica), this protein is D-erythrulose-4-phosphate isomerase.